The primary structure comprises 249 residues: Chromosome segregation and cytokinesis defective protein 1 (249 aa).

A coiled-coil region spans residues 12–48; it reads VVAMADTLETRVKDLLEEYKKKLREVALQTAKAESDR. Disordered stretches follow at residues 70–89, 94–183, and 208–249; these read PDDF…AAVA, LPSE…PEKP, and TTAT…GTSV. Residues 73–85 are compositionally biased toward acidic residues; that stretch reads FYIESGEEEEEGE. The segment covering 109-126 has biased composition (polar residues); the sequence is QKTSIPIGQNSGRNTVQV. Residues 224 to 236 are compositionally biased toward low complexity; it reads SGAASKKAAAAAG.

The protein belongs to the borealin family. Highly divergent. As to quaternary structure, component of the CPC complex which consists of icp-1; csc-1; bir-1 and air-2. Within the complex interacts with Aurora B/air-2, bir-1 and icp-1.

The protein resides in the nucleus. It localises to the chromosome. Its subcellular location is the centromere. The protein localises to the cytoplasm. It is found in the cytoskeleton. The protein resides in the spindle. Functionally, component of the chromosomal passenger complex (CPC), a complex that acts as a key regulator of chromosome segregation and cytokinesis during mitosis. The CPC complex has essential functions at the centromere in ensuring correct chromosome alignment and segregation. In the complex, it may be required to direct the Aurora B/air-2 to centromeric DNA. The protein is Chromosome segregation and cytokinesis defective protein 1 (csc-1) of Caenorhabditis elegans.